The sequence spans 78 residues: RNA-binding protein Hfq (78 aa).

The 60-residue stretch at 10 to 69 (DPFLNALRKEHVPVSIYLVNGIKLQGHIESFDQYVVLLRNTVTQMVYKHAISTVVPARAV) folds into the Sm domain.

It belongs to the Hfq family. In terms of assembly, homohexamer.

Functionally, RNA chaperone that binds small regulatory RNA (sRNAs) and mRNAs to facilitate mRNA translational regulation in response to envelope stress, environmental stress and changes in metabolite concentrations. Also binds with high specificity to tRNAs. The chain is RNA-binding protein Hfq from Herminiimonas arsenicoxydans.